A 464-amino-acid chain; its full sequence is Glutamate--tRNA ligase (464 aa).

Positions proline 9 to glycine 19 match the 'HIGH' region motif. The short motif at lysine 242 to arginine 246 is the 'KMSKS' region element. Position 245 (lysine 245) interacts with ATP.

This sequence belongs to the class-I aminoacyl-tRNA synthetase family. Glutamate--tRNA ligase type 1 subfamily. As to quaternary structure, monomer.

Its subcellular location is the cytoplasm. It carries out the reaction tRNA(Glu) + L-glutamate + ATP = L-glutamyl-tRNA(Glu) + AMP + diphosphate. Functionally, catalyzes the attachment of glutamate to tRNA(Glu) in a two-step reaction: glutamate is first activated by ATP to form Glu-AMP and then transferred to the acceptor end of tRNA(Glu). The sequence is that of Glutamate--tRNA ligase from Neisseria meningitidis serogroup C (strain 053442).